We begin with the raw amino-acid sequence, 461 residues long: MALWGGRFSQGADSRFKQFNDSLRFDYRLAEQDIQGSMAWAKALVKVGVLTADEQGKLQQAMEVLLASVQQDPHQILNSDAEDIHSWVESQLIAAVGDLGKKLHTGRSRNDQVATDLKLWCKAQGELLLGSISALQAGLVASARANQAAVLPGYTHLQRAQPVTFAHWALAYVEMLERDYSRLQDALKRLDTSPLGCGALAGTAYAIDREALALDMGFGGATRNSLDSVSDRDHVVELMHVASLSMTHLSRFAEDLIFYNTGEAGFVELSDAVTSGSSLMPQKKNPDALELIRGKTGRVVGAQMGMLMSLKALPLAYNKDMQEDKEGLFDALDTWHDCLDMAALVLIDLKVNVERTKAAAQGGYANATELADYLVAKGIPFREAHHIVGETVVYALEVKKPLEDLSLPEFQRFSPVIGEDVYPNLELEATLAKRVAKGGVARELVDAALTAAEQWLAKWAG.

Belongs to the lyase 1 family. Argininosuccinate lyase subfamily.

The protein localises to the cytoplasm. The enzyme catalyses 2-(N(omega)-L-arginino)succinate = fumarate + L-arginine. It participates in amino-acid biosynthesis; L-arginine biosynthesis; L-arginine from L-ornithine and carbamoyl phosphate: step 3/3. The chain is Argininosuccinate lyase from Aeromonas salmonicida (strain A449).